The following is a 152-amino-acid chain: MSLVVPDNFQHILRLLNTNVDGKVKVMFAMTQIKGVGRRYANIVCKKADIDMSKRAGELTTEELERIVTIIQNPSQFKIPSWFLNRQKDINDGKSFQLLANNVDSKLREDLERLKKIQTHRGLRHALDLRVRGQHTKTTGRRGKTVGVSKKK.

It belongs to the universal ribosomal protein uS13 family. In terms of assembly, component of the small ribosomal subunit (SSU). Mature yeast ribosomes consist of a small (40S) and a large (60S) subunit. The 40S small subunit contains 1 molecule of ribosomal RNA (18S rRNA) and at least 33 different proteins. The large 60S subunit contains 3 rRNA molecules (25S, 5.8S and 5S rRNA) and at least 46 different proteins.

Its subcellular location is the cytoplasm. Its function is as follows. Component of the ribosome, a large ribonucleoprotein complex responsible for the synthesis of proteins in the cell. The small ribosomal subunit (SSU) binds messenger RNAs (mRNAs) and translates the encoded message by selecting cognate aminoacyl-transfer RNA (tRNA) molecules. The large subunit (LSU) contains the ribosomal catalytic site termed the peptidyl transferase center (PTC), which catalyzes the formation of peptide bonds, thereby polymerizing the amino acids delivered by tRNAs into a polypeptide chain. The nascent polypeptides leave the ribosome through a tunnel in the LSU and interact with protein factors that function in enzymatic processing, targeting, and the membrane insertion of nascent chains at the exit of the ribosomal tunnel. This Schizosaccharomyces pombe (strain 972 / ATCC 24843) (Fission yeast) protein is Small ribosomal subunit protein uS13A (rps1801).